A 511-amino-acid chain; its full sequence is 4,4'-diapophytoene desaturase (4,4'-diapolycopene-forming) (511 aa).

Belongs to the carotenoid/retinoid oxidoreductase family.

It carries out the reaction 15-cis-4,4'-diapophytoene + 4 FAD + 4 H(+) = all-trans-4,4'-diapolycopene + 4 FADH2. Its pathway is carotenoid biosynthesis. Functionally, involved in the biosynthesis of C30 carotenoids. Catalyzes four successive dehydrogenation reactions that lead to the introduction of four double bonds into 4,4'-diapophytoene (dehydrosqualene) to yield 4,4'-diapolycopene. This is 4,4'-diapophytoene desaturase (4,4'-diapolycopene-forming) from Methylomonas sp.